Consider the following 388-residue polypeptide: Formate-dependent phosphoribosylglycinamide formyltransferase (388 aa).

Residues 15–16 (EL) and Glu-75 contribute to the N(1)-(5-phospho-beta-D-ribosyl)glycinamide site. ATP contacts are provided by residues Arg-107, Lys-148, 153–158 (SSGKGQ), 188–191 (EEFL), and Glu-196. The 191-residue stretch at 112 to 302 (DLASAELALL…EFELHLRAVL (191 aa)) folds into the ATP-grasp domain. Residues Glu-261 and Glu-273 each contribute to the Mg(2+) site. N(1)-(5-phospho-beta-D-ribosyl)glycinamide is bound by residues Asp-280, Lys-350, and 357 to 358 (RR).

The protein belongs to the PurK/PurT family. In terms of assembly, homodimer.

The enzyme catalyses N(1)-(5-phospho-beta-D-ribosyl)glycinamide + formate + ATP = N(2)-formyl-N(1)-(5-phospho-beta-D-ribosyl)glycinamide + ADP + phosphate + H(+). It participates in purine metabolism; IMP biosynthesis via de novo pathway; N(2)-formyl-N(1)-(5-phospho-D-ribosyl)glycinamide from N(1)-(5-phospho-D-ribosyl)glycinamide (formate route): step 1/1. Its function is as follows. Involved in the de novo purine biosynthesis. Catalyzes the transfer of formate to 5-phospho-ribosyl-glycinamide (GAR), producing 5-phospho-ribosyl-N-formylglycinamide (FGAR). Formate is provided by PurU via hydrolysis of 10-formyl-tetrahydrofolate. The polypeptide is Formate-dependent phosphoribosylglycinamide formyltransferase (Prochlorococcus marinus (strain MIT 9313)).